The following is a 1047-amino-acid chain: Atrial natriuretic peptide receptor 2 (1047 aa).

The N-terminal stretch at 1–16 (MALPSLLLVVAALAGG) is a signal peptide. The Extracellular segment spans residues 17 to 458 (VRPPGARNLT…DKTPLSTLAI (442 aa)). Residues Asn-24 and Asn-35 are each glycosylated (N-linked (GlcNAc...) asparagine). A disulfide bridge links Cys-75 with Cys-101. Residues Asn-161, Asn-195, Asn-244, Asn-277, and Asn-349 are each glycosylated (N-linked (GlcNAc...) asparagine). Residues 459–478 (VALGTGVTFIMFGVSSFLIF) traverse the membrane as a helical segment. The Cytoplasmic portion of the chain corresponds to 479 to 1047 (RKLMLEKELA…GEQKGPPGLL (569 aa)). Ser-513 is subject to Phosphoserine. Residues 513–786 (SRLTLSLRGS…PDFGQIKGFI (274 aa)) form the Protein kinase domain. A Phosphothreonine modification is found at Thr-516. Phosphoserine occurs at positions 518, 522, 523, and 526. A Phosphothreonine modification is found at Thr-529. The Guanylate cyclase domain maps to 861–991 (TIYFSDIVGF…DTVNTASRME (131 aa)).

Belongs to the adenylyl cyclase class-4/guanylyl cyclase family. Phosphorylated. Phosphorylation of the protein kinase-like domain is required for full activation by CNP. Post-translationally, glycosylated. Widely expressed. Expressed in the columnar proliferating and prehypertrophic chondrocyte layers of the tibia.

The protein resides in the cell membrane. The catalysed reaction is GTP = 3',5'-cyclic GMP + diphosphate. Its function is as follows. Receptor for the C-type natriuretic peptide NPPC/CNP hormone. Has guanylate cyclase activity upon binding of its ligand. May play a role in the regulation of skeletal growth. This is Atrial natriuretic peptide receptor 2 (Npr2) from Mus musculus (Mouse).